A 314-amino-acid chain; its full sequence is Thymidylate synthase (314 aa).

Residues arginine 21 and 176–177 (RR) each bind dUMP. Cysteine 196 serves as the catalytic Nucleophile. Residues 216–219 (RSAD), asparagine 227, and 257–259 (HLY) each bind dUMP. Aspartate 219 contributes to the (6R)-5,10-methylene-5,6,7,8-tetrahydrofolate binding site. Serine 313 is a binding site for (6R)-5,10-methylene-5,6,7,8-tetrahydrofolate.

This sequence belongs to the thymidylate synthase family. Bacterial-type ThyA subfamily. Homodimer.

The protein localises to the cytoplasm. The enzyme catalyses dUMP + (6R)-5,10-methylene-5,6,7,8-tetrahydrofolate = 7,8-dihydrofolate + dTMP. It functions in the pathway pyrimidine metabolism; dTTP biosynthesis. Its function is as follows. Catalyzes the reductive methylation of 2'-deoxyuridine-5'-monophosphate (dUMP) to 2'-deoxythymidine-5'-monophosphate (dTMP) while utilizing 5,10-methylenetetrahydrofolate (mTHF) as the methyl donor and reductant in the reaction, yielding dihydrofolate (DHF) as a by-product. This enzymatic reaction provides an intracellular de novo source of dTMP, an essential precursor for DNA biosynthesis. In Listeria monocytogenes serotype 4b (strain F2365), this protein is Thymidylate synthase.